The following is a 184-amino-acid chain: ATP synthase subunit b, chloroplastic (184 aa).

The helical transmembrane segment at 27-49 threads the bilayer; that stretch reads LATNLINLSVVLGVLVFFGKGVL.

The protein belongs to the ATPase B chain family. In terms of assembly, F-type ATPases have 2 components, F(1) - the catalytic core - and F(0) - the membrane proton channel. F(1) has five subunits: alpha(3), beta(3), gamma(1), delta(1), epsilon(1). F(0) has four main subunits: a(1), b(1), b'(1) and c(10-14). The alpha and beta chains form an alternating ring which encloses part of the gamma chain. F(1) is attached to F(0) by a central stalk formed by the gamma and epsilon chains, while a peripheral stalk is formed by the delta, b and b' chains.

The protein resides in the plastid. It is found in the chloroplast thylakoid membrane. F(1)F(0) ATP synthase produces ATP from ADP in the presence of a proton or sodium gradient. F-type ATPases consist of two structural domains, F(1) containing the extramembraneous catalytic core and F(0) containing the membrane proton channel, linked together by a central stalk and a peripheral stalk. During catalysis, ATP synthesis in the catalytic domain of F(1) is coupled via a rotary mechanism of the central stalk subunits to proton translocation. Functionally, component of the F(0) channel, it forms part of the peripheral stalk, linking F(1) to F(0). The polypeptide is ATP synthase subunit b, chloroplastic (Cicer arietinum (Chickpea)).